The sequence spans 71 residues: Small ribosomal subunit protein bS21 (71 aa).

This sequence belongs to the bacterial ribosomal protein bS21 family.

The sequence is that of Small ribosomal subunit protein bS21 from Dichelobacter nodosus (strain VCS1703A).